The chain runs to 192 residues: 3-hydroxyanthranilate 3,4-dioxygenase 1 (192 aa).

An O2-binding site is contributed by arginine 50. Residues histidine 54, glutamate 60, and histidine 102 each coordinate Fe cation. Glutamate 60 lines the substrate pocket. Substrate-binding residues include arginine 106 and glutamate 116. A divalent metal cation-binding residues include cysteine 131, cysteine 134, cysteine 168, and cysteine 171.

Belongs to the 3-HAO family. It depends on Fe(2+) as a cofactor.

Its subcellular location is the cytoplasm. It carries out the reaction 3-hydroxyanthranilate + O2 = (2Z,4Z)-2-amino-3-carboxymuconate 6-semialdehyde. Its pathway is cofactor biosynthesis; NAD(+) biosynthesis; quinolinate from L-kynurenine: step 3/3. Catalyzes the oxidative ring opening of 3-hydroxyanthranilate to 2-amino-3-carboxymuconate semialdehyde, which spontaneously cyclizes to quinolinate. This is 3-hydroxyanthranilate 3,4-dioxygenase 1 (bna1-1) from Aspergillus clavatus (strain ATCC 1007 / CBS 513.65 / DSM 816 / NCTC 3887 / NRRL 1 / QM 1276 / 107).